Here is a 209-residue protein sequence, read N- to C-terminus: Thymidylate kinase (209 aa).

Residue 10 to 17 participates in ATP binding; it reads GIDGCGKS.

Belongs to the thymidylate kinase family.

It carries out the reaction dTMP + ATP = dTDP + ADP. Its function is as follows. Phosphorylation of dTMP to form dTDP in both de novo and salvage pathways of dTTP synthesis. This chain is Thymidylate kinase, found in Parasynechococcus marenigrum (strain WH8102).